The sequence spans 323 residues: Phosphatidylethanolamine:ceramide ethanolaminephosphotransferase (323 aa).

At 1–26 (MAVPPVEMYSGSFWNRMRKPLPLRTQ) the chain is on the cytoplasmic side. A helical membrane pass occupies residues 27 to 47 (VIRFTVVFVIVSFILVVALQI). Residues 48–74 (THERMPDPKVTKPLPDLGFELLTKVPG) lie on the Extracellular side of the membrane. The chain crosses the membrane as a helical span at residues 75–95 (MYVLADCCIGFLNILSVFTAF). Residues 96-147 (KLYLLHRHCVGSGEPELPCNIPGVSRFFLSVWLCKENCRIELRNIHTIAWIR) lie on the Cytoplasmic side of the membrane. The chain crosses the membrane as a helical span at residues 148 to 168 (FITSYALLLLSRSIIMVVTSL). Topologically, residues 169-187 (PNPDDLCQNPPKIENRVKD) are extracellular. Residues 188 to 208 (ILLTVLTAGAGSIHCGDLMYS) form a helical membrane-spanning segment. At 209–233 (GHTVILTLHLMFHWIYGAMVHWSFR) the chain is on the cytoplasmic side. A helical membrane pass occupies residues 234–254 (PVVTVVAIFGYYCIVASRFHY). Residues 255-257 (TDD) lie on the Extracellular side of the membrane. The chain crosses the membrane as a helical span at residues 258–278 (VLVAIYLTIATFIAVGHNADG). The Cytoplasmic segment spans residues 279 to 323 (APWQLQLFIRWWPCCGANSREVAEDGVPVAIVIKNEEMMNFEGKS).

This sequence belongs to the sphingomyelin synthase family.

It is found in the membrane. It catalyses the reaction an N-acylsphing-4-enine + a 1,2-diacyl-sn-glycero-3-phosphoethanolamine = an N-acylsphing-4-enine 1-phosphoethanolamine + a 1,2-diacyl-sn-glycerol. The enzyme catalyses an N-acylsphinganine + a 1,2-diacyl-sn-glycero-3-phosphoethanolamine = an N-acylsphinganine-1-phosphoethanolamine + a 1,2-diacyl-sn-glycerol. Predominantly synthesizes ethanolamine-phosphorylceramide (EPC), with minimal sphingomyelin (SM)/inositol phosphorylceramide (IPC) synthase activity. Specificity is likely to be defined by residues in the lumenal catalytic domain that interact with the polar head groups of the phospholipid donors. EPC is synthesized by both stages of the parasite life cycle, bloodstream forms (BSF) and procyclic forms (PCF), by transferring the phosphoethanolamine from a 1,2-diacyl-sn-glycero-3-phosphoethanolamine to an N-acylsphing-4-enine (ceramide) or an N-acylsphinganine (dihydroceramide). Similarly, SM is synthesized by transferring the phosphocholine from a 1,2-diacyl-sn-glycero-3-phosphocholine to ceramide or dihydroceramide by BSF and PCF, while IPC is confined to PCF. The ceramide/dihydroceramide ratios are skewed towards dihydroceramide in PCF parasites and ceramide in BSF parasites, this is likely due to differential expression and/or regulation of dihydroceramide desaturase, the enzyme responsible for converting dihydroceramide to ceramide. This chain is Phosphatidylethanolamine:ceramide ethanolaminephosphotransferase, found in Trypanosoma brucei brucei.